A 171-amino-acid chain; its full sequence is L-methionine sulfoximine/L-methionine sulfone acetyltransferase (171 aa).

In terms of domain architecture, N-acetyltransferase spans 1–163 (MTIRFADKAD…DLTFMQLQLD (163 aa)). Residues 72-74 (RSF) and 82-84 (EHS) contribute to the substrate site. Acetyl-CoA is bound by residues 85–87 (VYV), 93–98 (GKGLGR), Asn-124, and Ser-133.

As to quaternary structure, homodimer.

It catalyses the reaction L-methionine sulfoximine + acetyl-CoA = N-acetyl-L-methionine sulfoximine + CoA + H(+). The enzyme catalyses L-methionine sulfone + acetyl-CoA = N-acetyl-L-methionine sulfone + CoA + H(+). In terms of biological role, plays a role in the resistance against the toxic effects of L-methionine sulfoximine (MSX), a rare amino acid which inhibits glutamine synthetase (GlnA). Catalyzes the acetylation of MSX. It can also use L-methionine sulfone (MSO). Also catalyzes the acylation of free L-amino acids using an acyl-CoA as acyl donor. The protein is L-methionine sulfoximine/L-methionine sulfone acetyltransferase (yncA) of Salmonella typhimurium (strain LT2 / SGSC1412 / ATCC 700720).